A 1204-amino-acid chain; its full sequence is ATP-dependent helicase/nuclease subunit A (1204 aa).

The region spanning 2-469 (TNFTKEQDQA…IILADNFRST (468 aa)) is the UvrD-like helicase ATP-binding domain. Position 23–30 (23–30 (ASAGSGKT)) interacts with ATP. Positions 497–784 (GQLQFGASYY…KLMTIHASKG (288 aa)) constitute a UvrD-like helicase C-terminal domain.

This sequence belongs to the helicase family. AddA subfamily. Heterodimer of AddA and AddB/RexB. Mg(2+) is required as a cofactor.

It catalyses the reaction Couples ATP hydrolysis with the unwinding of duplex DNA by translocating in the 3'-5' direction.. The enzyme catalyses ATP + H2O = ADP + phosphate + H(+). Its function is as follows. The heterodimer acts as both an ATP-dependent DNA helicase and an ATP-dependent, dual-direction single-stranded exonuclease. Recognizes the chi site generating a DNA molecule suitable for the initiation of homologous recombination. The AddA nuclease domain is required for chi fragment generation; this subunit has the helicase and 3' -&gt; 5' nuclease activities. In Lactobacillus gasseri (strain ATCC 33323 / DSM 20243 / BCRC 14619 / CIP 102991 / JCM 1131 / KCTC 3163 / NCIMB 11718 / NCTC 13722 / AM63), this protein is ATP-dependent helicase/nuclease subunit A.